The chain runs to 346 residues: Putative agmatine deiminase (346 aa).

Cysteine 338 functions as the Amidino-cysteine intermediate in the catalytic mechanism.

It belongs to the agmatine deiminase family.

It catalyses the reaction agmatine + H2O = N-carbamoylputrescine + NH4(+). The chain is Putative agmatine deiminase from Streptomyces avermitilis (strain ATCC 31267 / DSM 46492 / JCM 5070 / NBRC 14893 / NCIMB 12804 / NRRL 8165 / MA-4680).